Consider the following 356-residue polypeptide: Probable D-xylulose reductase A (356 aa).

Zn(2+)-binding residues include Cys-45, His-70, and Glu-71. 180–185 contributes to the NAD(+) binding site; the sequence is GAGPVG.

Belongs to the zinc-containing alcohol dehydrogenase family. It depends on Zn(2+) as a cofactor.

The catalysed reaction is xylitol + NAD(+) = D-xylulose + NADH + H(+). It functions in the pathway carbohydrate degradation; L-arabinose degradation via L-arabinitol; D-xylulose 5-phosphate from L-arabinose (fungal route): step 4/5. Functionally, xylitol dehydrogenase which catalyzes the conversion of xylitol to D-xylulose. Xylose is a major component of hemicelluloses such as xylan. Most fungi utilize D-xylose via three enzymatic reactions, xylose reductase (XR), xylitol dehydrogenase (XDH), and xylulokinase, to form xylulose 5-phosphate, which enters pentose phosphate pathway. This Arthroderma otae (strain ATCC MYA-4605 / CBS 113480) (Microsporum canis) protein is Probable D-xylulose reductase A (xdhA).